The chain runs to 549 residues: Oxygen-dependent choline dehydrogenase (549 aa).

FAD is bound at residue 4–33 (DFVIIGSGSAGSALAYRLSEDGRNSVIVLE). Catalysis depends on His465, which acts as the Proton acceptor.

The protein belongs to the GMC oxidoreductase family. Requires FAD as cofactor.

Its subcellular location is the cell membrane. The catalysed reaction is choline + A = betaine aldehyde + AH2. It catalyses the reaction betaine aldehyde + NAD(+) + H2O = glycine betaine + NADH + 2 H(+). Its pathway is amine and polyamine biosynthesis; betaine biosynthesis via choline pathway; betaine aldehyde from choline (cytochrome c reductase route): step 1/1. Functionally, involved in the biosynthesis of the osmoprotectant glycine betaine. Catalyzes the oxidation of choline to betaine aldehyde and betaine aldehyde to glycine betaine at the same rate. The polypeptide is Oxygen-dependent choline dehydrogenase (Rhizobium meliloti (strain 1021) (Ensifer meliloti)).